Consider the following 427-residue polypeptide: Zinc finger protein DPF3 (427 aa).

The tract at residues 182–244 (LENDENADEV…NDAASQDDHD (63 aa)) is disordered. Positions 184–199 (NDENADEVNEEEDLEE) are enriched in acidic residues. Over residues 233–244 (RRNDAASQDDHD) the composition is skewed to basic and acidic residues. The C2H2-type zinc finger occupies 247–270 (YVCDICGKRYKNRPGLSYHYAHTH). The tract at residues 272–301 (ASEEGDEAREQETRSSPVHRNENHKPQKGP) is disordered. The segment covering 279–296 (AREQETRSSPVHRNENHK) has biased composition (basic and acidic residues). PHD-type zinc fingers lie at residues 308 to 368 (NNYC…CKSC) and 365 to 415 (CKSC…CREL).

The protein belongs to the requiem/DPF family. As to quaternary structure, component of the BAF complex. Interacts with acetylated histones H3 and H4. Component of neuron-specific chromatin remodeling complex (nBAF complex), a subfamily of ATP-dependent SWI/SNF chromatin remodeling complexes. In terms of tissue distribution, expressed in the heart and somites.

The protein resides in the nucleus. Muscle-specific component of the BAF complex, a multiprotein complex involved in transcriptional activation and repression of select genes by chromatin remodeling (alteration of DNA-nucleosome topology). Specifically binds acetylated lysines on histone 3 and 4. In the complex, it acts as a tissue-specific anchor between histone acetylations and methylations and chromatin remodeling. It thereby probably plays an essential role in heart and skeletal muscle development. Belongs to the neuron-specific chromatin remodeling complex (nBAF complex) and plays a role in neural development. The polypeptide is Zinc finger protein DPF3 (DPF3) (Gallus gallus (Chicken)).